Consider the following 360-residue polypeptide: uncharacterized protein (360 aa).

In terms of domain architecture, ABC transporter spans 4–235 (LSLQHIQKIY…PANMFVSGFI (232 aa)). 37 to 44 (GPSGCGKS) is an ATP binding site.

The protein belongs to the ABC transporter superfamily.

This is an uncharacterized protein from Escherichia coli (strain K12).